A 240-amino-acid chain; its full sequence is HTH-type transcriptional repressor STM4068 (240 aa).

Residues 9 to 77 (TPLYKQLFFI…RGSGSVVCSV (69 aa)) form the HTH gntR-type domain. A DNA-binding region (H-T-H motif) is located at residues 37-56 (QKEIARSYNVSLIVVKQAWS).

Functionally, represses the expression of the STM4065-STM4067 operon. The protein is HTH-type transcriptional repressor STM4068 of Salmonella typhimurium (strain LT2 / SGSC1412 / ATCC 700720).